Here is a 256-residue protein sequence, read N- to C-terminus: Thiazole synthase (256 aa).

Catalysis depends on K95, which acts as the Schiff-base intermediate with DXP. 1-deoxy-D-xylulose 5-phosphate-binding positions include G156, 182 to 183, and 204 to 205; these read AG and NT.

Belongs to the ThiG family. As to quaternary structure, homotetramer. Forms heterodimers with either ThiH or ThiS.

The protein localises to the cytoplasm. It carries out the reaction [ThiS sulfur-carrier protein]-C-terminal-Gly-aminoethanethioate + 2-iminoacetate + 1-deoxy-D-xylulose 5-phosphate = [ThiS sulfur-carrier protein]-C-terminal Gly-Gly + 2-[(2R,5Z)-2-carboxy-4-methylthiazol-5(2H)-ylidene]ethyl phosphate + 2 H2O + H(+). Its pathway is cofactor biosynthesis; thiamine diphosphate biosynthesis. In terms of biological role, catalyzes the rearrangement of 1-deoxy-D-xylulose 5-phosphate (DXP) to produce the thiazole phosphate moiety of thiamine. Sulfur is provided by the thiocarboxylate moiety of the carrier protein ThiS. In vitro, sulfur can be provided by H(2)S. The polypeptide is Thiazole synthase (Salmonella agona (strain SL483)).